The primary structure comprises 676 residues: Envelope glycoprotein (676 aa).

The first 32 residues, 1–32 (MEGLSLLQLPRDKFRKSSFFVWVIILFQKAFS), serve as a signal peptide directing secretion. The Extracellular portion of the chain corresponds to 33 to 650 (MPLGVVTNST…DDNWWTGWRQ (618 aa)). Asn40 is a glycosylation site (N-linked (GlcNAc...) asparagine; by host). Cystine bridges form between Cys53–Cys609, Cys108–Cys135, Cys121–Cys147, Cys511–Cys556, and Cys601–Cys608. The interval 54-201 (KDHLASTDQL…TFLQSPPIRE (148 aa)) is receptor-binding. Asn204, Asn208, Asn238, Asn257, Asn268, Asn296, and Asn314 each carry an N-linked (GlcNAc...) asparagine; by host glycan. The mucin-like region stretch occupies residues 305 to 485 (ELSFETLSLN…STSNGLITST (181 aa)). The tract at residues 313 to 351 (LNETEDDDATSSRTTKGRISDRATRKYSDLVPKDSPGMV) is disordered. Basic and acidic residues predominate over residues 330 to 344 (RISDRATRKYSDLVP). Residue Asn366 is glycosylated (N-linked (GlcNAc...) asparagine; by host). The disordered stretch occupies residues 406–458 (SSSQILSSSPTMAPSPETQTSTTYTPKLPVMTTEESTTPPRNSPGSTTEAPTL). Polar residues-rich tracts occupy residues 415–430 (PTMA…TTYT) and 438–458 (TEES…APTL). The N-linked (GlcNAc...) asparagine; by host glycan is linked to Asn463. The tract at residues 524 to 539 (HNAAGIAWIPYFGPGA) is fusion peptide. Positions 554-595 (LVCGLRQLANETTQALQLFLRATTELRTYTILNRKAIDFLLR) form a coiled coil. Asn563 carries N-linked (GlcNAc...) asparagine; by host glycosylation. Positions 615 to 634 (WTKNITDKINQIIHDFIDNP) form a coiled coil. An N-linked (GlcNAc...) asparagine; by host glycan is attached at Asn618. The chain crosses the membrane as a helical span at residues 651 to 671 (WIPAGIGITGIIIAIIALLCV). Residues Cys670 and Cys672 are each lipidated (S-palmitoyl cysteine; by host). Topologically, residues 672–676 (CKLLC) are cytoplasmic.

The protein belongs to the filoviruses glycoprotein family. Homotrimer; each monomer consists of a GP1 and a GP2 subunit linked by disulfide bonds. The resulting peplomers (GP1,2) protrude from the virus surface as spikes. Interacts with host integrin alpha-V/ITGAV. Interacts with host CLEC10A. Binds also to host CD209 and CLEC4M/DC-SIGN(R). Interacts with host FOLR1. Interacts with BST2; this interaction inhibits the antiviral effect of BST2 and this allows viral release from infected cells. Interacts with host FCN1; this interaction enhances viral entry. Interacts with host TLR4; this interaction induces cell death in T-lymphocytes or proinflammatory cytokines and SOCS1 production in monocytes. As to quaternary structure, interacts with host entry receptor NPC1. In terms of assembly, GP1 and GP2delta are part of GP1,2delta soluble complexes released by ectodomain shedding. Post-translationally, the signal peptide region modulates GP's high mannose glycosylation, thereby determining the efficiency of the interactions with DC-SIGN(R). In terms of processing, N-glycosylated. O-glycosylated in the mucin-like region. Post-translationally, palmitoylation of GP2 is not required for its function. In terms of processing, specific enzymatic cleavages in vivo yield mature proteins. The precursor is processed into GP1 and GP2 by host cell furin in the trans Golgi, and maybe by other host proteases, to yield the mature GP1 and GP2 proteins. The cleavage site corresponds to the furin optimal cleavage sequence [KR]-X-[KR]-R. This cleavage does not seem to be required for function. After the internalization of the virus into cell endosomes, GP1 C-terminus is removed by the endosomal proteases cathepsin B, cathepsin L, or both, leaving a 19-kDa N-terminal fragment which is further digested by cathepsin B. Proteolytic processing of GP1,2 by host ADAM17 can remove the transmembrane anchor of GP2 and leads to shedding of complexes consisting in GP1 and truncated GP2 (GP1,2delta).

The protein localises to the virion membrane. Its subcellular location is the host cell membrane. It is found in the secreted. Its function is as follows. Trimeric GP1,2 complexes form the virion surface spikes and mediate the viral entry processes, with GP1 acting as the receptor-binding subunit and GP2 as the membrane fusion subunit. At later times of infection, down-regulates the expression of various host cell surface molecules that are essential for immune surveillance and cell adhesion. Down-modulates several integrins including ITGA1, ITGA2, ITGA3, ITGA4, ITGA5, ITGA6, ITGAV and ITGB1. This decrease in cell adhesion molecules may lead to cell detachment, contributing to the disruption of blood vessel integrity and hemorrhages developed during infection (cytotoxicity). Interacts with host TLR4 and thereby stimulates the differentiation and activation of monocytes leading to bystander death of T-lymphocytes. Down-regulates as well the function of host natural killer cells. Counteracts the antiviral effect of host BST2/tetherin that restricts release of progeny virions from infected cells. However, cooperates with VP40 and host BST2 to activate canonical NF-kappa-B pathway in a manner dependent on neddylation. Functions as a decoy for anti-GP1,2 antibodies thereby contributing to viral immune evasion. Interacts and activates host macrophages and dendritic cells inducing up-regulation of cytokine transcription. This effect is mediated throught activation of host TLR4. Functionally, responsible for binding to the receptor(s) on target cells. Interacts with CD209/DC-SIGN and CLEC4M/DC-SIGNR which act as cofactors for virus entry into dendritic cells (DCs) and endothelial cells. Binding to the macrophage specific lectin CLEC10A also seem to enhance virus infectivity. Interaction with FOLR1/folate receptor alpha may be a cofactor for virus entry in some cell types, although results are contradictory. Members of the Tyro3 receptor tyrosine kinase family also seem to be cell entry factors in filovirus infection. Once attached, the virions are internalized through clathrin-dependent endocytosis and/or macropinocytosis. After internalization of the virus into the endosomes of the host cell, proteolysis of GP1 by two cysteine proteases, CTSB/cathepsin B and CTSL/cathepsin L removes the glycan cap and allows GP1 binding to the host entry receptor NPC1. NPC1-binding, Ca(2+) and acidic pH induce a conformational change of GP2, which unmasks its fusion peptide and permit membranes fusion. In terms of biological role, acts as a class I viral fusion protein. Under the current model, the protein has at least 3 conformational states: pre-fusion native state, pre-hairpin intermediate state, and post-fusion hairpin state. During viral and target cell membrane fusion, the coiled coil regions (heptad repeats) assume a trimer-of-hairpins structure, positioning the fusion peptide in close proximity to the C-terminal region of the ectodomain. The formation of this structure appears to drive apposition and subsequent fusion of viral and target cell membranes. Responsible for penetration of the virus into the cell cytoplasm by mediating the fusion of the membrane of the endocytosed virus particle with the endosomal membrane. Low pH in endosomes induces an irreversible conformational change in GP2, releasing the fusion hydrophobic peptide. This chain is Envelope glycoprotein (GP), found in Epomops franqueti (Franquet's epauletted fruit bat).